The chain runs to 270 residues: MATPQPVDARTQPWRETPGGDLVALGRPVRQALHLVRHNPAQGRVLSRRETILLVLFALTLHGAVIHWLSQQRTPALPEVPPQVPPMTIEFTAPAPPVVEPPPPEPLPPVVEEPPPPVVDENAVKPPPPKPVPKPKPKPKPQPRPKPAPKAVEPAPPAPPQPAAPPAPPAPAAAPAPLTPPSANAGYLHNPAPEYPALAMRRGWEGTVLLRVHVLASGSPSEIQVQKSSGREALDQAAVKAVKRWSFVPAKRGDKAEDGWVSVPIDFKLN.

Residues 1–51 lie on the Cytoplasmic side of the membrane; that stretch reads MATPQPVDARTQPWRETPGGDLVALGRPVRQALHLVRHNPAQGRVLSRRET. The helical transmembrane segment at 52–69 threads the bilayer; sequence ILLVLFALTLHGAVIHWL. Topologically, residues 70–270 are periplasmic; that stretch reads SQQRTPALPE…VSVPIDFKLN (201 aa). The disordered stretch occupies residues 80 to 187; it reads VPPQVPPMTI…LTPPSANAGY (108 aa). The segment covering 94–118 has biased composition (pro residues); it reads PAPPVVEPPPPEPLPPVVEEPPPPV. Residues 133 to 143 are compositionally biased toward basic residues; it reads PKPKPKPKPQP. Pro residues predominate over residues 144–180; it reads RPKPAPKAVEPAPPAPPQPAAPPAPPAPAAAPAPLTP. One can recognise a TonB C-terminal domain in the interval 180–270; sequence PPSANAGYLH…VSVPIDFKLN (91 aa).

It belongs to the TonB family. In terms of assembly, homodimer. Forms a complex with the accessory proteins ExbB and ExbD.

The protein localises to the cell inner membrane. Functionally, interacts with outer membrane receptor proteins that carry out high-affinity binding and energy dependent uptake into the periplasmic space of specific substrates. It could act to transduce energy from the cytoplasmic membrane to specific energy-requiring processes in the outer membrane, resulting in the release into the periplasm of ligands bound by these outer membrane proteins. In Pseudomonas aeruginosa (strain ATCC 15692 / DSM 22644 / CIP 104116 / JCM 14847 / LMG 12228 / 1C / PRS 101 / PAO1), this protein is Protein tonB2 (tonB2).